Consider the following 82-residue polypeptide: MTHETPPPSYNDVMLQMFHDHSVFLHQENLSPRTINSTSSSEIKNVRRRGTFIILACLIISVILCLILILHIFNVRYGGTKP.

The short motif at 7–10 (PPSY) is the PPXY motif element. A helical transmembrane segment spans residues 52–72 (FIILACLIISVILCLILILHI).

As to quaternary structure, interacts with host ITCH; this interaction probably mediates ITCH degradation. Interacts probably with NEDD4.

It is found in the membrane. Down-regulates of the TCR/CD3E complex and the transferrin receptor TFRC in host T-cells by blocking them from recycling back to the cell surface. This is U24 protein from Homo sapiens (Human).